Reading from the N-terminus, the 203-residue chain is Superoxide dismutase [Mn] (203 aa).

His27, His81, Asp164, and His168 together coordinate Mn(2+).

The protein belongs to the iron/manganese superoxide dismutase family. The cofactor is Mn(2+).

The catalysed reaction is 2 superoxide + 2 H(+) = H2O2 + O2. Its function is as follows. Destroys superoxide anion radicals which are normally produced within the cells and which are toxic to biological systems. The protein is Superoxide dismutase [Mn] (sodA) of Xanthomonas campestris pv. campestris (strain 8004).